The primary structure comprises 749 residues: Amyloid-beta A4 precursor protein-binding family A member 2 (749 aa).

Disordered regions lie at residues Met-1–Glu-94 and Asp-130–Pro-343. The residue at position 11 (Ser-11) is a Phosphoserine. Positions Gly-70–Thr-80 are enriched in polar residues. 2 stretches are compositionally biased toward acidic residues: residues Ser-81 to Glu-94 and Thr-131 to Thr-142. An STXBP1-binding region spans residues His-185 to Ala-270. Ser-208 is subject to Phosphoserine. Acidic residues predominate over residues Asp-218 to Asp-227. Over residues Leu-237–Glu-247 the composition is skewed to polar residues. Residues Arg-305–His-315 show a composition bias toward basic and acidic residues. A PID domain is found at Leu-366–Asp-555. 2 consecutive PDZ domains span residues Glu-568–Ser-653 and Thr-659–Ala-735.

In terms of assembly, part of a multimeric complex containing STXBP1 and syntaxin-1. Binds to the cytoplasmic domain of amyloid-beta protein, and to the nuclear factor NF-kappa-B/p65 via its PDZ domain. Interacts with the N-terminal domain of NECAB3.

Functionally, putative function in synaptic vesicle exocytosis by binding to STXBP1, an essential component of the synaptic vesicle exocytotic machinery. May modulate processing of the amyloid-beta precursor protein (APP) and hence formation of APP-beta. This chain is Amyloid-beta A4 precursor protein-binding family A member 2 (APBA2), found in Pongo abelii (Sumatran orangutan).